Consider the following 1077-residue polypeptide: Error-prone DNA polymerase (1077 aa).

This sequence belongs to the DNA polymerase type-C family. DnaE2 subfamily.

The protein localises to the cytoplasm. The enzyme catalyses DNA(n) + a 2'-deoxyribonucleoside 5'-triphosphate = DNA(n+1) + diphosphate. DNA polymerase involved in damage-induced mutagenesis and translesion synthesis (TLS). It is not the major replicative DNA polymerase. The polypeptide is Error-prone DNA polymerase (Brucella abortus biovar 1 (strain 9-941)).